The following is a 197-amino-acid chain: Nucleoside triphosphate pyrophosphatase (197 aa).

The Proton acceptor role is filled by Asp71.

It belongs to the Maf family. It depends on a divalent metal cation as a cofactor.

It is found in the cytoplasm. It catalyses the reaction a ribonucleoside 5'-triphosphate + H2O = a ribonucleoside 5'-phosphate + diphosphate + H(+). The catalysed reaction is a 2'-deoxyribonucleoside 5'-triphosphate + H2O = a 2'-deoxyribonucleoside 5'-phosphate + diphosphate + H(+). Nucleoside triphosphate pyrophosphatase. May have a dual role in cell division arrest and in preventing the incorporation of modified nucleotides into cellular nucleic acids. This Nostoc punctiforme (strain ATCC 29133 / PCC 73102) protein is Nucleoside triphosphate pyrophosphatase.